Here is a 369-residue protein sequence, read N- to C-terminus: MKNAYYIGLMSGTSMDGVDAVLVDFSGPQPQLICSHTEAIPSHLLKGLQRLCLPGADEINRLGRLDRNVGQLFALAVNNLLAKCNIAKEDIIAIGSHGQTVRHMPNLEVGFTLQIGDPNTIATETGIDVIADFRRKDIALGGQGAPLVPAFHQQTFAEIGKKRIILNIGGIANVTYLPGTSEHVLGFDTGPGNTLIDAWIQHVKSEPFDKNGEWAASGKTNPDLLAQLLSHPYFSLAYPKSTGRELFNQAWLEQQLSPFNHLDEEDIQSTLLDMTCHSIARDVIKLSPEGELFVCGGGAFNTQLMQRLAALLPGYKLDTTSALGVDPKWAEGIAFAWLAMRNHLGLPANLPAVTGASREAVLGGRFSAK.

ATP is bound at residue 12–19; the sequence is GTSMDGVD.

It belongs to the anhydro-N-acetylmuramic acid kinase family.

It carries out the reaction 1,6-anhydro-N-acetyl-beta-muramate + ATP + H2O = N-acetyl-D-muramate 6-phosphate + ADP + H(+). The protein operates within amino-sugar metabolism; 1,6-anhydro-N-acetylmuramate degradation. It participates in cell wall biogenesis; peptidoglycan recycling. Functionally, catalyzes the specific phosphorylation of 1,6-anhydro-N-acetylmuramic acid (anhMurNAc) with the simultaneous cleavage of the 1,6-anhydro ring, generating MurNAc-6-P. Is required for the utilization of anhMurNAc either imported from the medium or derived from its own cell wall murein, and thus plays a role in cell wall recycling. The polypeptide is Anhydro-N-acetylmuramic acid kinase (Shewanella sp. (strain W3-18-1)).